The chain runs to 427 residues: Enolase (427 aa).

Gln-163 serves as a coordination point for (2R)-2-phosphoglycerate. Glu-205 functions as the Proton donor in the catalytic mechanism. Asp-242, Glu-285, and Asp-312 together coordinate Mg(2+). (2R)-2-phosphoglycerate is bound by residues Lys-337, Arg-366, Ser-367, and Lys-388. Lys-337 (proton acceptor) is an active-site residue.

Belongs to the enolase family. Mg(2+) serves as cofactor.

It localises to the cytoplasm. The protein localises to the secreted. It is found in the cell surface. It catalyses the reaction (2R)-2-phosphoglycerate = phosphoenolpyruvate + H2O. It functions in the pathway carbohydrate degradation; glycolysis; pyruvate from D-glyceraldehyde 3-phosphate: step 4/5. In terms of biological role, catalyzes the reversible conversion of 2-phosphoglycerate (2-PG) into phosphoenolpyruvate (PEP). It is essential for the degradation of carbohydrates via glycolysis. The chain is Enolase from Polaromonas sp. (strain JS666 / ATCC BAA-500).